The following is a 1038-amino-acid chain: Activated CDC42 kinase 1 (1038 aa).

The SAM-like domain stretch occupies residues 1 to 110 (MQPEEGTGWL…TSPAPGGPAG (110 aa)). The tract at residues 90–114 (PPHHSQSTFRKTSPAPGGPAGEGPL) is disordered. The Protein kinase domain maps to 126–385 (LRLLEKLGDG…PTFVALRDFL (260 aa)). ATP-binding positions include 132–140 (LGDGSFGVV) and lysine 158. Catalysis depends on aspartate 252, which acts as the Proton acceptor. A Phosphotyrosine; by SRC and autocatalysis modification is found at tyrosine 284. Positions 388-448 (AQPTDMRALQ…PRNVVTSVAG (61 aa)) constitute an SH3 domain. The CRIB domain maps to 454-466 (ISQPLQNSFIHTG). The tract at residues 497-535 (LSVELSTSRPPQHLGGVKKPTYDPVSEDQDPLSSDFKRL) is disordered. Tyrosine 518 is subject to Phosphotyrosine. The segment at 623–652 (DWDARPLPPPPAYDDVAQDEDDFEICSINS) is required for interaction with SRC. A required for interaction with NEDD4 region spans residues 632–635 (PPAY). Disordered regions lie at residues 659–702 (VPAG…SSAQ) and 718–840 (LQAP…GPRA). A Phosphoserine modification is found at serine 724. The tract at residues 733–876 (GDDKPQVPPR…SYLERYQRFL (144 aa)) is EBD domain. Composition is skewed to pro residues over residues 738–749 (QVPPRVPIPPRP), 772–783 (PASPPRVPPREP), and 794–805 (PLVPPGSSPLPP). A Phosphotyrosine modification is found at tyrosine 827. Position 839 is an omega-N-methylarginine (arginine 839). Phosphotyrosine is present on residues tyrosine 859 and tyrosine 872. Serine 881 carries the post-translational modification Phosphoserine. Residues 917–957 (LDPKANFSTNNSNPGARPPPPRATARLPQRGCPGDGPEAGR) form a disordered region. In terms of domain architecture, UBA spans 958–996 (PADKIQMAMVHGVTTEECQAALQCHGWSVQRAAQYLKVE).

This sequence belongs to the protein kinase superfamily. Tyr protein kinase family. In terms of assembly, interacts with NEDD4 (via WW3 domain). NEDD4L and EGF promote association with NEDD4. Homodimer. Interacts with AR, CDC42, WWASL and WWOX. Interacts with CSPG4 (activated). Interacts with MERTK (activated); stimulates autophosphorylation. May interact (phosphorylated) with HSP90AB1; maintains kinase activity. Interacts with NPHP1. Interacts with SNX9 (via SH3 domain). Interacts with SRC (via SH2 and SH3 domain). Interacts with EGFR, and this interaction is dependent on EGF stimulation and kinase activity of EGFR. Interacts (via kinase domain) with AKT1. Part of a collagen stimulated complex involved in cell migration composed of CDC42, CRK, TNK2 and BCAR1/p130cas. Interacts with BCAR1/p130cas via SH3 domains. Forms complexes with GRB2 and numerous receptor tyrosine kinases (RTK) including LTK, AXL or PDGFRL, in which GRB2 promotes RTK recruitment by TNK2. The cofactor is Mg(2+). Post-translationally, autophosphorylation regulates kinase activity. Phosphorylation on Tyr-518 is required for interaction with SRC and is observed during association with clathrin-coated pits. Polyubiquitinated by NEDD4 and NEDD4L. Degradation can be induced by EGF and is lysosome-dependent. As to expression, the Tyr-284 phosphorylated form shows a significant increase in expression in breast cancers during the progressive stages i.e. normal to hyperplasia (ADH), ductal carcinoma in situ (DCIS), invasive ductal carcinoma (IDC) and lymph node metastatic (LNMM) stages. It also shows a significant increase in expression in prostate cancers during the progressive stages.

Its subcellular location is the cell membrane. The protein resides in the nucleus. It is found in the endosome. It localises to the cell junction. The protein localises to the adherens junction. Its subcellular location is the cytoplasmic vesicle membrane. The protein resides in the cytoplasmic vesicle. It is found in the clathrin-coated vesicle. It localises to the membrane. The protein localises to the clathrin-coated pit. Its subcellular location is the cytoplasm. The protein resides in the perinuclear region. It is found in the cytosol. The enzyme catalyses L-tyrosyl-[protein] + ATP = O-phospho-L-tyrosyl-[protein] + ADP + H(+). It catalyses the reaction L-seryl-[protein] + ATP = O-phospho-L-seryl-[protein] + ADP + H(+). The catalysed reaction is L-threonyl-[protein] + ATP = O-phospho-L-threonyl-[protein] + ADP + H(+). With respect to regulation, inhibited by AIM-100 (4-amino-5,6-biaryl-furo[2,3-d]pyrimidine), which suppresses activating phosphorylation at Tyr-284. Repressed by dasatinib. In terms of biological role, non-receptor tyrosine-protein and serine/threonine-protein kinase that is implicated in cell spreading and migration, cell survival, cell growth and proliferation. Transduces extracellular signals to cytosolic and nuclear effectors. Phosphorylates AKT1, AR, MCF2, WASL and WWOX. Implicated in trafficking and clathrin-mediated endocytosis through binding to epidermal growth factor receptor (EGFR) and clathrin. Binds to both poly- and mono-ubiquitin and regulates ligand-induced degradation of EGFR, thereby contributing to the accumulation of EGFR at the limiting membrane of early endosomes. Downstream effector of CDC42 which mediates CDC42-dependent cell migration via phosphorylation of BCAR1. May be involved both in adult synaptic function and plasticity and in brain development. Activates AKT1 by phosphorylating it on 'Tyr-176'. Phosphorylates AR on 'Tyr-267' and 'Tyr-363' thereby promoting its recruitment to androgen-responsive enhancers (AREs). Phosphorylates WWOX on 'Tyr-287'. Phosphorylates MCF2, thereby enhancing its activity as a guanine nucleotide exchange factor (GEF) toward Rho family proteins. Contributes to the control of AXL receptor levels. Confers metastatic properties on cancer cells and promotes tumor growth by negatively regulating tumor suppressor such as WWOX and positively regulating pro-survival factors such as AKT1 and AR. Phosphorylates WASP. The chain is Activated CDC42 kinase 1 (TNK2) from Homo sapiens (Human).